We begin with the raw amino-acid sequence, 159 residues long: Ribosomal RNA large subunit methyltransferase H (159 aa).

S-adenosyl-L-methionine is bound by residues leucine 76, glycine 108, and 127 to 132; that span reads FSKMTF.

It belongs to the RNA methyltransferase RlmH family. Homodimer.

It is found in the cytoplasm. It catalyses the reaction pseudouridine(1915) in 23S rRNA + S-adenosyl-L-methionine = N(3)-methylpseudouridine(1915) in 23S rRNA + S-adenosyl-L-homocysteine + H(+). In terms of biological role, specifically methylates the pseudouridine at position 1915 (m3Psi1915) in 23S rRNA. This is Ribosomal RNA large subunit methyltransferase H from Bifidobacterium animalis subsp. lactis (strain AD011).